The primary structure comprises 539 residues: Trigger factor (539 aa).

Positions 163–252 (GDQLTVQIET…VLDVQERLLP (90 aa)) constitute a PPIase FKBP-type domain. 2 stretches are compositionally biased toward low complexity: residues 434–447 (SFEQ…ASEP) and 475–484 (AASPEAASEP). The interval 434–539 (SFEQAASPEA…DVATPEARTE (106 aa)) is disordered. Polar residues predominate over residues 509–528 (TETPIVSQEENGESVENQSV).

This sequence belongs to the FKBP-type PPIase family. Tig subfamily.

It is found in the cytoplasm. It carries out the reaction [protein]-peptidylproline (omega=180) = [protein]-peptidylproline (omega=0). Its function is as follows. Involved in protein export. Acts as a chaperone by maintaining the newly synthesized protein in an open conformation. Functions as a peptidyl-prolyl cis-trans isomerase. The polypeptide is Trigger factor (Roseiflexus sp. (strain RS-1)).